The chain runs to 518 residues: Anthranilate synthase component 1 (518 aa).

L-tryptophan-binding positions include S38 and 283-285; that span reads PYM. 324–325 is a chorismate binding site; the sequence is GT. Residue E357 coordinates Mg(2+). Residues Y445, R465, 479–481, and G481 contribute to the chorismate site; that span reads GAG. E494 serves as a coordination point for Mg(2+).

Belongs to the anthranilate synthase component I family. As to quaternary structure, heterotetramer consisting of two non-identical subunits: a beta subunit (TrpG) and a large alpha subunit (TrpE). Requires Mg(2+) as cofactor.

It catalyses the reaction chorismate + L-glutamine = anthranilate + pyruvate + L-glutamate + H(+). It participates in amino-acid biosynthesis; L-tryptophan biosynthesis; L-tryptophan from chorismate: step 1/5. With respect to regulation, feedback inhibited by tryptophan. Part of a heterotetrameric complex that catalyzes the two-step biosynthesis of anthranilate, an intermediate in the biosynthesis of L-tryptophan. In the first step, the glutamine-binding beta subunit (TrpG) of anthranilate synthase (AS) provides the glutamine amidotransferase activity which generates ammonia as a substrate that, along with chorismate, is used in the second step, catalyzed by the large alpha subunit of AS (TrpE) to produce anthranilate. In the absence of TrpG, TrpE can synthesize anthranilate directly from chorismate and high concentrations of ammonia. The sequence is that of Anthranilate synthase component 1 (trpE) from Corynebacterium glutamicum (strain ATCC 13032 / DSM 20300 / JCM 1318 / BCRC 11384 / CCUG 27702 / LMG 3730 / NBRC 12168 / NCIMB 10025 / NRRL B-2784 / 534).